The sequence spans 485 residues: Transcription factor E2FA (485 aa).

The span at 1 to 11 (MSGVVRSSPGS) shows a compositional bias: low complexity. Disordered regions lie at residues 1-69 (MSGV…SNNN) and 114-159 (SGFT…SPIT). Pro residues predominate over residues 12–26 (SQPPPPPPHHPPSSP). A compositionally biased stretch (polar residues) spans 114 to 125 (SGFTNIPSSPCQ). Residues 129–141 (KGGRVNIKSKAKG) show a composition bias toward basic residues. A compositionally biased stretch (polar residues) spans 142–159 (NKSTPQTPISTNAGSPIT). Residues 167–232 (RYDSSLGLLT…PFKNRILWKG (66 aa)) mediate DNA binding. The stretch at 245-286 (SVLQLQAEIENLALEEQALDNQIRQTEERLRDLSENEKNQKW) forms a coiled coil. Residues 249–277 (LQAEIENLALEEQALDNQIRQTEERLRDL) form a leucine-zipper region. The retinoblastoma protein binding stretch occupies residues 435-450 (DYWLLSNAEISMTDIW).

It belongs to the E2F/DP family. Heterodimer with DP proteins. Interacts (via dimerization domain) preferentially with DPA, but also with DPB. Interacts with maize retinoblastoma-related protein RBR1. No interaction with E2FD. As to expression, highly expressed in the shoot apical meristem, emerging leaf primordia, and vascular tissues of young leaf primordia. Expressed in flowers, in epidermis and cortex of hypocotyls, and at lower levels in leaves.

The protein localises to the cytoplasm. It is found in the nucleus. Transcription activator that binds DNA cooperatively with DP proteins through the E2 recognition site, 5'-TTTC[CG]CGC-3' found in the promoter region of a number of genes whose products are involved in cell cycle regulation or in DNA replication. The binding of retinoblastoma-related proteins represses transactivation. Regulates gene expression both positively and negatively. Activates the expression of E2FB. Involved in the control of cell-cycle progression from G1 to S phase. Stimulates cell proliferation and delays differentiation. The polypeptide is Transcription factor E2FA (E2FA) (Arabidopsis thaliana (Mouse-ear cress)).